A 374-amino-acid chain; its full sequence is Spore germination protein B3 (374 aa).

A signal peptide spans 1–19; that stretch reads MKTASKFSVMFFMLLALCG. A lipid anchor (N-palmitoyl cysteine) is attached at C20. Residue C20 is the site of S-diacylglycerol cysteine attachment.

The protein belongs to the GerABKC lipoprotein family.

Its subcellular location is the cell membrane. Its function is as follows. Involved in the response to the germinative mixture of L-asparagine, glucose, fructose and potassium ions (AGFK). Cannot stimulate germination in the absence of gerD and gerK gene products (fructose and glucose receptors respectively). This Bacillus subtilis (strain 168) protein is Spore germination protein B3 (gerBC).